A 558-amino-acid polypeptide reads, in one-letter code: N-acetylglucosamine-6-O-sulfatase (558 aa).

Ser101 bears the 3-oxoalanine (Ser) mark.

This sequence belongs to the sulfatase family. In terms of processing, the conversion to 3-oxoalanine (also known as C-formylglycine, FGly), of a serine or cysteine residue in prokaryotes and of a cysteine residue in eukaryotes, is critical for catalytic activity.

Functionally, exosulfatase involved in the degradation of the glycosaminoglycan (GAG) heparan sulfate (HS). Catalyzes the hydrolysis of the 6-sulfate groups of the N-acetyl-D-glucosamine 6-sulfate units. GAG-specific sulfatases play a key role in the persistence of the major human gut symbiont B.thetaiotaomicron in the host gastrointestinal tract. This Bacteroides thetaiotaomicron (strain ATCC 29148 / DSM 2079 / JCM 5827 / CCUG 10774 / NCTC 10582 / VPI-5482 / E50) protein is N-acetylglucosamine-6-O-sulfatase.